The following is a 78-amino-acid chain: MTSTNGPSARDTGFVEGQQAKTQLLTVAEVAALMRVSKMTVYRLVHNGELPAVRVGRSFRVHAKAVHDMLETSYFDAG.

Positions 24-45 form a DNA-binding region, H-T-H motif; the sequence is LLTVAEVAALMRVSKMTVYRLV.

In Mycobacterium tuberculosis (strain CDC 1551 / Oshkosh), this protein is Putative DNA-binding protein MT0521.